Consider the following 985-residue polypeptide: Disease resistance protein At4g27190 (985 aa).

Residues 24-88 are a coiled coil; sequence ANAIKFKSNV…ISKARLKLEE (65 aa). An NB-ARC domain is found at 167-429; sequence IGVWGMGGVG…MAEGFMEELG (263 aa). An ATP-binding site is contributed by 171–178; sequence GMGGVGKT. LRR repeat units lie at residues 502-523, 526-547, 551-572, 575-597, 598-620, and 621-643; these read SLRR…VEEF, KTSV…GFLQ, TLRI…SLLR, SLHS…ETLA, KLEL…EELK, and RFRH…VVSR.

The protein belongs to the disease resistance NB-LRR family.

Its function is as follows. Disease resistance protein. This is Disease resistance protein At4g27190 from Arabidopsis thaliana (Mouse-ear cress).